A 556-amino-acid polypeptide reads, in one-letter code: Oxygen-dependent choline dehydrogenase (556 aa).

FAD is bound at residue 6–35 (DYIIIGAGSAGNVLAARLTEDPGVSVLLLE). His-475 (proton acceptor) is an active-site residue.

It belongs to the GMC oxidoreductase family. FAD is required as a cofactor.

The catalysed reaction is choline + A = betaine aldehyde + AH2. It carries out the reaction betaine aldehyde + NAD(+) + H2O = glycine betaine + NADH + 2 H(+). The protein operates within amine and polyamine biosynthesis; betaine biosynthesis via choline pathway; betaine aldehyde from choline (cytochrome c reductase route): step 1/1. In terms of biological role, involved in the biosynthesis of the osmoprotectant glycine betaine. Catalyzes the oxidation of choline to betaine aldehyde and betaine aldehyde to glycine betaine at the same rate. The protein is Oxygen-dependent choline dehydrogenase of Xanthomonas campestris pv. campestris (strain 8004).